A 124-amino-acid chain; its full sequence is Large ribosomal subunit protein uL18 (124 aa).

Belongs to the universal ribosomal protein uL18 family. Part of the 50S ribosomal subunit; part of the 5S rRNA/L5/L18/L25 subcomplex. Contacts the 5S and 23S rRNAs.

Its function is as follows. This is one of the proteins that bind and probably mediate the attachment of the 5S RNA into the large ribosomal subunit, where it forms part of the central protuberance. This Aquifex pyrophilus protein is Large ribosomal subunit protein uL18.